Consider the following 498-residue polypeptide: XK-related protein 4 (498 aa).

The disordered stretch occupies residues 24-46 (SEHSGSVQGLHPGAQPDSAGAGD). A run of 2 helical transmembrane segments spans residues 81-101 (CLWI…DVWL) and 111-131 (YWWF…VQLF). The segment at 166–203 (SHGDVTAQHHPATPQRQASTASRNTTTNSTASTGLGPR) is disordered. Residues 183–198 (ASTASRNTTTNSTAST) are compositionally biased toward low complexity. Transmembrane regions (helical) follow at residues 302 to 322 (LFIY…LWYL) and 332 to 352 (FAVP…VFML).

The protein belongs to the XK family.

The protein resides in the cell membrane. It carries out the reaction a 1,2-diacyl-sn-glycero-3-phospho-L-serine(in) = a 1,2-diacyl-sn-glycero-3-phospho-L-serine(out). In terms of biological role, phospholipid scramblase that promotes phosphatidylserine exposure on apoptotic cell surface. Phosphatidylserine is a specific marker only present at the surface of apoptotic cells and acts as a specific signal for engulfment. The chain is XK-related protein 4 from Tetraodon nigroviridis (Spotted green pufferfish).